A 230-amino-acid polypeptide reads, in one-letter code: MALTGDLKSFSFADILQVLHHDKKSGVLIVEWPDITVAYYIKDGELVLARPVDKVFRVYVDRDFEKLIEKLRLNERTMAETIKKFFLSRLENKDGIFSFTQGFINYPENVPVAFPAEELIMEAARHLTLEETERKISDELLVFEKAPDWEVKVQRANLKEEERKVLELVNGENTVKDILEKSGLDKLTVYRTLYGLLAIGAIRRKRKKEIRKPTISLDLLTKLIEKIKKL.

This is an uncharacterized protein from Aquifex aeolicus (strain VF5).